Reading from the N-terminus, the 60-residue chain is Protein BNLF2a (60 aa).

Polar residues predominate over residues 14–26 (SSACGLPGSSTET). The interval 14–34 (SSACGLPGSSTETRPSHPCPE) is disordered. Residues 41–59 (LRLLLVVLCVLFGLLCLLL) form a helical membrane-spanning segment.

Belongs to the lymphocryptovirus BNLF2a family. As to quaternary structure, interacts with host TAP1 and TAP2.

It localises to the host endoplasmic reticulum membrane. Participates in viral evasion from HLA class I-restricted T-cell immunity. Associates with host TAP1 and TAP2 and prevents TAP-mediated peptide transport and subsequent loading. This is Protein BNLF2a from Homo sapiens (Human).